The primary structure comprises 259 residues: Probable transcriptional regulatory protein Noca_2383 (259 aa).

Belongs to the TACO1 family.

Its subcellular location is the cytoplasm. In Nocardioides sp. (strain ATCC BAA-499 / JS614), this protein is Probable transcriptional regulatory protein Noca_2383.